The chain runs to 147 residues: Hemoglobin subunit beta (147 aa).

The region spanning 3–147 is the Globin domain; it reads HWTAEEKQLI…VAHALARKYH (145 aa). His64 and His93 together coordinate heme b.

The protein belongs to the globin family. As to quaternary structure, heterotetramer of two alpha chains and two beta chains. In terms of tissue distribution, red blood cells.

In terms of biological role, involved in oxygen transport from the lung to the various peripheral tissues. The sequence is that of Hemoglobin subunit beta (HBB) from Anas platyrhynchos (Mallard).